A 41-amino-acid chain; its full sequence is Diuretic hormone 1 (41 aa).

Ile-41 is modified (isoleucine amide).

The protein resides in the secreted. Functionally, regulation of fluid secretion. May stimulate primary urine secretion by Malpighian tubules and causes a dose-dependent stimulation of cAMP levels in the tubules. The chain is Diuretic hormone 1 from Hyles lineata (White-lined sphinx moth).